We begin with the raw amino-acid sequence, 132 residues long: Fatty acid-binding protein, adipocyte (132 aa).

Cys-2 is subject to N-acetylcysteine. Ser-13 is modified (phosphoserine). Position 20 is a phosphotyrosine; by Tyr-kinases (Tyr-20). Residues 22–32 carry the Nuclear localization signal motif; the sequence is KEVGVGFATRK. 127–129 provides a ligand contact to a fatty acid; it reads RVY.

This sequence belongs to the calycin superfamily. Fatty-acid binding protein (FABP) family. In terms of assembly, monomer. Homodimer. Interacts with PPARG.

It localises to the cytoplasm. The protein localises to the nucleus. In terms of biological role, lipid transport protein in adipocytes. Binds both long chain fatty acids and retinoic acid. Delivers long-chain fatty acids and retinoic acid to their cognate receptors in the nucleus. This chain is Fatty acid-binding protein, adipocyte (Fabp4), found in Rattus norvegicus (Rat).